The following is a 100-amino-acid chain: Vesicle-associated membrane protein 8 (100 aa).

Methionine 1 is modified (N-acetylmethionine). Topologically, residues 1-75 are cytoplasmic; it reads MEEASEGGGN…ARKFWWKNVK (75 aa). Serine 5 and serine 18 each carry phosphoserine. Positions 12 to 72 constitute a v-SNARE coiled-coil homology domain; the sequence is RVRNLQSEVE…QKVARKFWWK (61 aa). Threonine 28, threonine 48, and threonine 54 each carry phosphothreonine. Phosphoserine is present on serine 55. 2 (Microbial infection) N6-stearoyl lysine lipidation sites follow: lysine 64 and lysine 68. The helical; Anchor for type IV membrane protein transmembrane segment at 76-96 threads the bilayer; sequence MIVLICVIVFIIILFIVLFAT. At 97–100 the chain is on the vesicular side; that stretch reads GAFS.

The protein belongs to the synaptobrevin family. Forms a SNARE complex composed of VAMP8, SNAP29 and STX17 involved in fusion of autophagosome with lysosome. Found in a number of SNARE complexes with NAPA, SNAP23, SNAP25, STX1A, STX4, STX7, STX8 and VTI1B. Interacts with PICALM. SNARE complex formation and binding by PICALM are mutually exclusive processes for VAMP8. Interacts with SBF2/MTMR13. Interacts with RAB21 (in GTP-bound form) in response to starvation; the interaction probably regulates VAMP8 endolysosomal trafficking. Interacts with STX17; this interaction is increased in the absence of TMEM39A. Interacts with TRIM6. In terms of assembly, (Microbial infection) The interaction with STX17 is decreased in presence of SARS coronavirus-2/SARS-CoV-2 ORF3A protein. In terms of processing, (Microbial infection) Stearoylated By S.flexneri N-epsilon-fatty acyltransferase IcsB, thereby disrupting the host actin cytoskeleton. As to expression, platelets.

It localises to the lysosome membrane. It is found in the early endosome membrane. The protein resides in the late endosome membrane. The protein localises to the cell membrane. Its subcellular location is the zymogen granule membrane. In terms of biological role, SNAREs, soluble N-ethylmaleimide-sensitive factor-attachment protein receptors, are essential proteins for fusion of cellular membranes. SNAREs localized on opposing membranes assemble to form a trans-SNARE complex, an extended, parallel four alpha-helical bundle that drives membrane fusion. VAMP8 is a SNARE involved in autophagy through the direct control of autophagosome membrane fusion with the lysososome membrane via its interaction with the STX17-SNAP29 binary t-SNARE complex. Also required for dense-granule secretion in platelets. Also plays a role in regulated enzyme secretion in pancreatic acinar cells. Involved in the abscission of the midbody during cell division, which leads to completely separate daughter cells. Involved in the homotypic fusion of early and late endosomes. Also participates in the activation of type I interferon antiviral response through a TRIM6-dependent mechanism. The polypeptide is Vesicle-associated membrane protein 8 (Homo sapiens (Human)).